The primary structure comprises 138 residues: Endonuclease V (138 aa).

The Nucleophile; via amide nitrogen role is filled by T2. Catalysis depends on E23, which acts as the Proton acceptor.

In terms of assembly, monomer.

The catalysed reaction is Cleaves the N-glycosidic bond between the 5'-pyrimidine residue in cyclobutadipyrimidine (in DNA) and the corresponding deoxy-D-ribose residue.. It carries out the reaction 2'-deoxyribonucleotide-(2'-deoxyribose 5'-phosphate)-2'-deoxyribonucleotide-DNA = a 3'-end 2'-deoxyribonucleotide-(2,3-dehydro-2,3-deoxyribose 5'-phosphate)-DNA + a 5'-end 5'-phospho-2'-deoxyribonucleoside-DNA + H(+). In terms of biological role, participates in the repair of UV-damaged DNA by excising pyrimidine dimers that are the major UV-lesions. DNA glycosylase activity hydrolyzes the glycosylic bond of the 5' pyrimidine of the dimer. This leaves apurinic/apyrimidic (AP) sites in the DNA. These AP sites are removed by the AP lyase activity which cleaves the intrapyrimidine phosphodiester bond. Catalysis proceeds via a protonated imine covalent intermediate between the alpha-amino group of the N-terminal threonine residue and the C1' of the deoxyribose sugar of the 5' pyrimidine at the dimer site. The polypeptide is Endonuclease V (Enterobacteria phage T4 (Bacteriophage T4)).